The chain runs to 881 residues: Alanine--tRNA ligase (881 aa).

Zn(2+) is bound by residues His-564, His-568, Cys-666, and His-670.

This sequence belongs to the class-II aminoacyl-tRNA synthetase family. Requires Zn(2+) as cofactor.

It is found in the cytoplasm. The catalysed reaction is tRNA(Ala) + L-alanine + ATP = L-alanyl-tRNA(Ala) + AMP + diphosphate. In terms of biological role, catalyzes the attachment of alanine to tRNA(Ala) in a two-step reaction: alanine is first activated by ATP to form Ala-AMP and then transferred to the acceptor end of tRNA(Ala). Also edits incorrectly charged Ser-tRNA(Ala) and Gly-tRNA(Ala) via its editing domain. This Caldicellulosiruptor saccharolyticus (strain ATCC 43494 / DSM 8903 / Tp8T 6331) protein is Alanine--tRNA ligase.